Consider the following 356-residue polypeptide: sn-glycerol-3-phosphate import ATP-binding protein UgpC (356 aa).

In terms of domain architecture, ABC transporter spans 4 to 235 (LKLQAVTKSW…PASLFVASFI (232 aa)). Residue 37–44 (GPSGCGKS) coordinates ATP.

The protein belongs to the ABC transporter superfamily. sn-glycerol-3-phosphate importer (TC 3.A.1.1.3) family. In terms of assembly, the complex is composed of two ATP-binding proteins (UgpC), two transmembrane proteins (UgpA and UgpE) and a solute-binding protein (UgpB).

It is found in the cell inner membrane. It carries out the reaction sn-glycerol 3-phosphate(out) + ATP + H2O = sn-glycerol 3-phosphate(in) + ADP + phosphate + H(+). In terms of biological role, part of the ABC transporter complex UgpBAEC involved in sn-glycerol-3-phosphate (G3P) import. Responsible for energy coupling to the transport system. The chain is sn-glycerol-3-phosphate import ATP-binding protein UgpC from Escherichia coli (strain UTI89 / UPEC).